A 572-amino-acid chain; its full sequence is Urease subunit alpha (572 aa).

A Urease domain is found at 134-572 (GGIDSHIHFI…LPLTQRYFLF (439 aa)). Residues His-139, His-141, and Lys-222 each contribute to the Ni(2+) site. Lys-222 carries the N6-carboxylysine modification. His-224 provides a ligand contact to substrate. Ni(2+) contacts are provided by His-251 and His-277. Residue His-325 is the Proton donor of the active site. A Ni(2+)-binding site is contributed by Asp-365.

The protein belongs to the metallo-dependent hydrolases superfamily. Urease alpha subunit family. In terms of assembly, heterotrimer of UreA (gamma), UreB (beta) and UreC (alpha) subunits. Three heterotrimers associate to form the active enzyme. Ni cation serves as cofactor. Post-translationally, carboxylation allows a single lysine to coordinate two nickel ions.

The protein resides in the cytoplasm. The catalysed reaction is urea + 2 H2O + H(+) = hydrogencarbonate + 2 NH4(+). Its pathway is nitrogen metabolism; urea degradation; CO(2) and NH(3) from urea (urease route): step 1/1. The sequence is that of Urease subunit alpha from Variovorax paradoxus (strain S110).